Reading from the N-terminus, the 237-residue chain is Probable Bax inhibitor 1 (237 aa).

Residues 1–29 lie on the Cytoplasmic side of the membrane; that stretch reads MNVFDRNINFDSLFKFSQISHSTQVHLKN. A helical membrane pass occupies residues 30–50; sequence VYSSLAVCMFVAAAGSYVHVV. At 51–52 the chain is on the lumenal side; that stretch reads TR. The chain crosses the membrane as a helical span at residues 53–73; the sequence is LFQGGMLSVLGSLGMMFWLAM. The Cytoplasmic segment spans residues 74-86; the sequence is TPHNSETEKKRLA. The chain crosses the membrane as a helical span at residues 87 to 107; sequence ILAGFAFLTGVGLCPTLDFVI. Residues 108-112 are Lumenal-facing; sequence AINPS. Residues 113–133 form a helical membrane-spanning segment; that stretch reads IIVTAFLGTSVIFVCFTLSAL. Residues 134–139 lie on the Cytoplasmic side of the membrane; the sequence is YAKRRS. A helical transmembrane segment spans residues 140–160; it reads YLFLGGTLMSGLSILFLMSMM. The Lumenal segment spans residues 161–166; the sequence is NMFFGS. The chain crosses the membrane as a helical span at residues 167–187; that stretch reads VMLFKAHMYLGLLIMCGFVLX. Residues 188-206 lie on the Cytoplasmic side of the membrane; it reads DTQLIIEKAENGDKDYVWH. Residues 207 to 227 constitute an intramembrane region (helical); the sequence is SVDLFLDFITIFRKLMVILAL. The Cytoplasmic segment spans residues 228–237; that stretch reads NDKDKKKEKK.

This sequence belongs to the BI1 family. As to expression, highly abundant in testis.

Its subcellular location is the endoplasmic reticulum membrane. Suppressor of apoptosis. Modulates unfolded protein response signaling. Modulate ER calcium homeostasis by acting as a calcium-leak channel. The sequence is that of Probable Bax inhibitor 1 (tmbim6) from Paralichthys olivaceus (Bastard halibut).